A 173-amino-acid polypeptide reads, in one-letter code: MSVVIINTGCSNLSSIKYAICRLGYNPKISTSVRDILSANKILLPGVGSAYSAIRVLSESNLLNIIKKCQQPFLGICLGMQLLSAFSSEAQGLDLLSIINSPVYRLNSGSLPLPHNGWNNVEICRNNVLFEDIENHSKFYFLHSYSVDITKYTIAKTLYNTYFSAAIQKNNFW.

Residues 2 to 173 (SVVIINTGCS…SAAIQKNNFW (172 aa)) enclose the Glutamine amidotransferase type-1 domain. C77 (nucleophile) is an active-site residue.

In terms of assembly, heterodimer of HisH and HisF.

It is found in the cytoplasm. The enzyme catalyses 5-[(5-phospho-1-deoxy-D-ribulos-1-ylimino)methylamino]-1-(5-phospho-beta-D-ribosyl)imidazole-4-carboxamide + L-glutamine = D-erythro-1-(imidazol-4-yl)glycerol 3-phosphate + 5-amino-1-(5-phospho-beta-D-ribosyl)imidazole-4-carboxamide + L-glutamate + H(+). The catalysed reaction is L-glutamine + H2O = L-glutamate + NH4(+). It participates in amino-acid biosynthesis; L-histidine biosynthesis; L-histidine from 5-phospho-alpha-D-ribose 1-diphosphate: step 5/9. Functionally, IGPS catalyzes the conversion of PRFAR and glutamine to IGP, AICAR and glutamate. The HisH subunit catalyzes the hydrolysis of glutamine to glutamate and ammonia as part of the synthesis of IGP and AICAR. The resulting ammonia molecule is channeled to the active site of HisF. This chain is Imidazole glycerol phosphate synthase subunit HisH (hisH), found in Buchnera aphidicola subsp. Melaphis rhois.